A 143-amino-acid chain; its full sequence is MAIERTFSIIKPNAVAKNVIGSIFARFEAAGFRIVGTRMLHLTVEQARGFYAEHDGKPFFDGLVEFMTSGPIVVSVLESENAVQRHRDLLGATNPANALAGTLRADYADSFTENGTHGSDSLESAQREIAFFFGEGEVCPRTR.

Residues K11, F59, R87, T93, R104, and N114 each coordinate ATP. H117 serves as the catalytic Pros-phosphohistidine intermediate.

This sequence belongs to the NDK family. Homotetramer. It depends on Mg(2+) as a cofactor.

It is found in the cytoplasm. It carries out the reaction a 2'-deoxyribonucleoside 5'-diphosphate + ATP = a 2'-deoxyribonucleoside 5'-triphosphate + ADP. It catalyses the reaction a ribonucleoside 5'-diphosphate + ATP = a ribonucleoside 5'-triphosphate + ADP. Functionally, major role in the synthesis of nucleoside triphosphates other than ATP. The ATP gamma phosphate is transferred to the NDP beta phosphate via a ping-pong mechanism, using a phosphorylated active-site intermediate. In Salmonella arizonae (strain ATCC BAA-731 / CDC346-86 / RSK2980), this protein is Nucleoside diphosphate kinase.